The sequence spans 119 residues: Large ribosomal subunit protein bL20 (119 aa).

This sequence belongs to the bacterial ribosomal protein bL20 family.

Binds directly to 23S ribosomal RNA and is necessary for the in vitro assembly process of the 50S ribosomal subunit. It is not involved in the protein synthesizing functions of that subunit. The sequence is that of Large ribosomal subunit protein bL20 from Mycoplasma capricolum subsp. capricolum (strain California kid / ATCC 27343 / NCTC 10154).